The following is a 199-amino-acid chain: dCTP deaminase (199 aa).

Residues 110 to 115 (RSSLAR), Asp-128, 136 to 138 (VLE), Tyr-171, and Gln-182 contribute to the dCTP site. Glu-138 (proton donor/acceptor) is an active-site residue.

The protein belongs to the dCTP deaminase family. Homotrimer.

It carries out the reaction dCTP + H2O + H(+) = dUTP + NH4(+). It participates in pyrimidine metabolism; dUMP biosynthesis; dUMP from dCTP (dUTP route): step 1/2. Its function is as follows. Catalyzes the deamination of dCTP to dUTP. In Pseudoalteromonas atlantica (strain T6c / ATCC BAA-1087), this protein is dCTP deaminase.